The chain runs to 282 residues: 4-hydroxy-3-methylbut-2-enyl diphosphate reductase (282 aa).

Cysteine 14 lines the [4Fe-4S] cluster pocket. Residues histidine 43 and histidine 78 each contribute to the (2E)-4-hydroxy-3-methylbut-2-enyl diphosphate site. Residues histidine 43 and histidine 78 each coordinate dimethylallyl diphosphate. Isopentenyl diphosphate is bound by residues histidine 43 and histidine 78. Cysteine 100 contacts [4Fe-4S] cluster. Histidine 128 provides a ligand contact to (2E)-4-hydroxy-3-methylbut-2-enyl diphosphate. Position 128 (histidine 128) interacts with dimethylallyl diphosphate. Histidine 128 contacts isopentenyl diphosphate. Catalysis depends on glutamate 130, which acts as the Proton donor. Threonine 164 serves as a coordination point for (2E)-4-hydroxy-3-methylbut-2-enyl diphosphate. [4Fe-4S] cluster is bound at residue cysteine 192. (2E)-4-hydroxy-3-methylbut-2-enyl diphosphate-binding residues include serine 220, serine 221, asparagine 222, and serine 266. Positions 220, 221, 222, and 266 each coordinate dimethylallyl diphosphate. Isopentenyl diphosphate is bound by residues serine 220, serine 221, asparagine 222, and serine 266.

Belongs to the IspH family. It depends on [4Fe-4S] cluster as a cofactor.

It catalyses the reaction isopentenyl diphosphate + 2 oxidized [2Fe-2S]-[ferredoxin] + H2O = (2E)-4-hydroxy-3-methylbut-2-enyl diphosphate + 2 reduced [2Fe-2S]-[ferredoxin] + 2 H(+). The enzyme catalyses dimethylallyl diphosphate + 2 oxidized [2Fe-2S]-[ferredoxin] + H2O = (2E)-4-hydroxy-3-methylbut-2-enyl diphosphate + 2 reduced [2Fe-2S]-[ferredoxin] + 2 H(+). It participates in isoprenoid biosynthesis; dimethylallyl diphosphate biosynthesis; dimethylallyl diphosphate from (2E)-4-hydroxy-3-methylbutenyl diphosphate: step 1/1. Its pathway is isoprenoid biosynthesis; isopentenyl diphosphate biosynthesis via DXP pathway; isopentenyl diphosphate from 1-deoxy-D-xylulose 5-phosphate: step 6/6. In terms of biological role, catalyzes the conversion of 1-hydroxy-2-methyl-2-(E)-butenyl 4-diphosphate (HMBPP) into a mixture of isopentenyl diphosphate (IPP) and dimethylallyl diphosphate (DMAPP). Acts in the terminal step of the DOXP/MEP pathway for isoprenoid precursor biosynthesis. The sequence is that of 4-hydroxy-3-methylbut-2-enyl diphosphate reductase from Clostridium perfringens (strain SM101 / Type A).